A 62-amino-acid polypeptide reads, in one-letter code: ATP synthase subunit K, mitochondrial (62 aa).

The helical transmembrane segment at H14–P30 threads the bilayer.

F-type ATP synthases have 2 components, the catalytic core F(1) and the membrane-embedded component F(0), linked together by a central stalk and a peripheral stalk. The central stalk, also called rotor shaft, is often seen as part of F(1). The peripheral stalk is seen as part of F(0). F(0) contains the membrane channel next to the rotor. F-type ATP synthases form dimers but each monomer functions independently in ATP generation. The dimer consists of 18 different polypeptides: ATP1 (subunit alpha, part of F(1), 3 molecules per monomer), ATP2 (subunit beta, part of F(1), 3 molecules per monomer), ATP3 (subunit gamma, part of the central stalk), ATP4 (subunit b, part of the peripheral stalk), ATP5/OSCP (subunit 5/OSCP, part of the peripheral stalk), ATP6 (subunit a, part of the peripheral stalk), ATP7 (subunit d, part of the peripheral stalk), ATP8 (subunit 8, part of the peripheral stalk), OLI1 (subunit c, part of the rotor, 10 molecules per monomer), ATP14 (subunit h, part of the peripheral stalk), ATP15 (subunit epsilon, part of the central stalk), ATP16 (subunit delta, part of the central stalk), ATP17 (subunit f, part of the peripheral stalk), ATP18 (subunit i/j, part of the peripheral stalk). Dimer-specific subunits are ATP19 (subunit k, at interface between monomers), ATP20 (subunit g, at interface between monomers), TIM11 (subunit e, at interface between monomers). Also contains subunit L.

It is found in the mitochondrion inner membrane. Its function is as follows. Mitochondrial membrane ATP synthase (F(1)F(0) ATP synthase or Complex V) produces ATP from ADP in the presence of a proton gradient across the membrane which is generated by electron transport complexes of the respiratory chain. F-type ATP synthases consist of two structural domains, F(1) - containing the extramembraneous catalytic core, and F(0) - containing the membrane proton channel, linked together by a central stalk and a peripheral stalk. During catalysis, ATP synthesis in the catalytic domain of F(1) is coupled via a rotary mechanism of the central stalk subunits to proton translocation. Part of the complex F(0) domain. Minor subunit located with subunit a/ATP6 in the membrane. The K chain binds the dimeric form by interacting with the G and E chains. The polypeptide is ATP synthase subunit K, mitochondrial (Pichia angusta (Yeast)).